The primary structure comprises 118 residues: Non-specific lipid-transfer protein A (118 aa).

The signal sequence occupies residues 1–25 (MAGVMKLACLVLACMIVAGPITANR). Intrachain disulfides connect Cys29-Cys76, Cys39-Cys53, Cys54-Cys100, and Cys74-Cys114.

Belongs to the plant LTP family.

Functionally, plant non-specific lipid-transfer proteins transfer phospholipids as well as galactolipids across membranes. May play a role in wax or cutin deposition in the cell walls of expanding epidermal cells and certain secretory tissues. The polypeptide is Non-specific lipid-transfer protein A (WAX9A) (Brassica oleracea var. italica (Broccoli)).